We begin with the raw amino-acid sequence, 299 residues long: tRNA dimethylallyltransferase (299 aa).

10-17 provides a ligand contact to ATP; that stretch reads GATATGKS. Residue 12–17 coordinates substrate; the sequence is TATGKS. Residues 35–38 form an interaction with substrate tRNA region; the sequence is DSRQ.

Belongs to the IPP transferase family. As to quaternary structure, monomer. Mg(2+) serves as cofactor.

The enzyme catalyses adenosine(37) in tRNA + dimethylallyl diphosphate = N(6)-dimethylallyladenosine(37) in tRNA + diphosphate. Its function is as follows. Catalyzes the transfer of a dimethylallyl group onto the adenine at position 37 in tRNAs that read codons beginning with uridine, leading to the formation of N6-(dimethylallyl)adenosine (i(6)A). This chain is tRNA dimethylallyltransferase, found in Rippkaea orientalis (strain PCC 8801 / RF-1) (Cyanothece sp. (strain PCC 8801)).